We begin with the raw amino-acid sequence, 156 residues long: Peptide methionine sulfoxide reductase MsrA (156 aa).

Residue Cys-10 is part of the active site.

The protein belongs to the MsrA Met sulfoxide reductase family.

The catalysed reaction is L-methionyl-[protein] + [thioredoxin]-disulfide + H2O = L-methionyl-(S)-S-oxide-[protein] + [thioredoxin]-dithiol. The enzyme catalyses [thioredoxin]-disulfide + L-methionine + H2O = L-methionine (S)-S-oxide + [thioredoxin]-dithiol. Functionally, has an important function as a repair enzyme for proteins that have been inactivated by oxidation. Catalyzes the reversible oxidation-reduction of methionine sulfoxide in proteins to methionine. The chain is Peptide methionine sulfoxide reductase MsrA from Acidobacterium capsulatum (strain ATCC 51196 / DSM 11244 / BCRC 80197 / JCM 7670 / NBRC 15755 / NCIMB 13165 / 161).